The sequence spans 827 residues: Cadherin-17 (827 aa).

An N-terminal signal peptide occupies residues 1 to 25; it reads MVSAQLHFLCLLTLYLTCGYGEEGK. The Extracellular portion of the chain corresponds to 26–786; it reads FSGPLKPMTF…RQDGIPTVGM (761 aa). 7 Cadherin domains span residues 29-127, 128-243, 244-339, 340-448, 449-565, 566-666, and 667-776; these read PLKP…TFLQ, SKYE…APEP, VEIR…PPTC, LSPV…IPIF, ETSN…VPVF, PQRI…PPRL, and AKDY…RPAG. Asparagine 148, asparagine 249, asparagine 418, asparagine 545, asparagine 573, asparagine 586, and asparagine 721 each carry an N-linked (GlcNAc...) asparagine glycan. The chain crosses the membrane as a helical span at residues 787-807; the sequence is AVGILLTTFLVIGIILAVVFI. At 808–827 the chain is on the cytoplasmic side; it reads RMRKDKVENPQSPENKPLRS.

As to expression, highest expression is found in intestine with lower expression in spleen, bone marrow, lung and testis. No expression detected in liver, kidney, heart, brain or skeletal muscle. Expressed in precursor B-cells and myeloid cells.

The protein localises to the cell membrane. Cadherins are calcium-dependent cell adhesion proteins. They preferentially interact with themselves in a homophilic manner in connecting cells; cadherins may thus contribute to the sorting of heterogeneous cell types. LI-cadherin may have a role in the morphological organization of liver and intestine. The protein is Cadherin-17 (Cdh17) of Mus musculus (Mouse).